A 337-amino-acid polypeptide reads, in one-letter code: Methylthioribose-1-phosphate isomerase (337 aa).

Substrate-binding positions include 51–53, R88, and Q187; that span reads RGA. Residue D228 is the Proton donor of the active site. 238–239 lines the substrate pocket; the sequence is NK.

The protein belongs to the eIF-2B alpha/beta/delta subunits family. MtnA subfamily.

It catalyses the reaction 5-(methylsulfanyl)-alpha-D-ribose 1-phosphate = 5-(methylsulfanyl)-D-ribulose 1-phosphate. It functions in the pathway amino-acid biosynthesis; L-methionine biosynthesis via salvage pathway; L-methionine from S-methyl-5-thio-alpha-D-ribose 1-phosphate: step 1/6. Its function is as follows. Catalyzes the interconversion of methylthioribose-1-phosphate (MTR-1-P) into methylthioribulose-1-phosphate (MTRu-1-P). The protein is Methylthioribose-1-phosphate isomerase of Anaeromyxobacter sp. (strain Fw109-5).